The sequence spans 665 residues: Envelope glycoprotein (665 aa).

The signal sequence occupies residues 1–31 (MESTTLSKPFKNQVNPWGPLIVLLILGRVNP). A receptor-binding domain (RBD) region spans residues 32 to 267 (VALGNSPHQV…KITDSGPRVP (236 aa)). At 32-605 (VALGNSPHQV…FNGSPWFTTL (574 aa)) the chain is on the extracellular side. Asn-43 carries an N-linked (GlcNAc...) asparagine; by host glycan. Disulfide bonds link Cys-77–Cys-129, Cys-103–Cys-118, Cys-104–Cys-114, Cys-152–Cys-172, and Cys-164–Cys-177. Asp-117 provides a ligand contact to Zn(2+). N-linked (GlcNAc...) asparagine; by host glycosylation is found at Asn-199 and Asn-211. A disulfide bond links Cys-209 and Cys-215. The tract at residues 266–307 (VPIGPNPVLSDQRPPSQPRSPPHSNSTPTETPLTLPEPPPAG) is disordered. Residue Asn-324 is glycosylated (N-linked (GlcNAc...) asparagine; by host). 6 disulfides stabilise this stretch: Cys-334–Cys-337, Cys-334–Cys-558, Cys-364–Cys-418, Cys-383–Cys-395, Cys-425–Cys-438, and Cys-550–Cys-557. A CXXC motif is present at residues 334-337 (CWLC). N-linked (GlcNAc...) asparagine; by host glycosylation is found at Asn-356 and Asn-363. Asn-396, Asn-400, and Asn-432 each carry an N-linked (GlcNAc...) asparagine; by host glycan. The interval 470 to 490 (VSLTLALLLGGLTMGGIAAGV) is fusion peptide. Residues 505-532 (AAVHDDLKEVEKSITNLEKSLTSLSEVV) are a coiled coil. The tract at residues 533 to 549 (LQNRRGLDLLFLKEGGL) is immunosuppression. The CX6CC signature appears at 550–558 (CAALKEECC). Residues 606 to 626 (ISTIMGPLIVLLLILLLGPCI) form a helical membrane-spanning segment. The S-palmitoyl cysteine; by host moiety is linked to residue Cys-625. Topologically, residues 627 to 665 (LNRLVQFVKDRISVVQALVLTQQYHQLKSIDPEEMESRE) are cytoplasmic. Positions 650–653 (YHQL) match the YXXL motif; contains endocytosis signal motif.

The mature envelope protein (Env) consists of a trimer of SU-TM heterodimers attached by a labile interchain disulfide bond. Specific enzymatic cleavages in vivo yield mature proteins. Envelope glycoproteins are synthesized as an inactive precursor that is N-glycosylated and processed likely by host cell furin or by a furin-like protease in the Golgi to yield the mature SU and TM proteins. The cleavage site between SU and TM requires the minimal sequence [KR]-X-[KR]-R. The R-peptide is released from the C-terminus of the cytoplasmic tail of the TM protein upon particle formation as a result of proteolytic cleavage by the viral protease. Cleavage of this peptide is required for TM to become fusogenic. Post-translationally, the CXXC motif is highly conserved across a broad range of retroviral envelope proteins. It is thought to participate in the formation of a labile disulfide bond possibly with the CX6CC motif present in the transmembrane protein. Isomerization of the intersubunit disulfide bond to an SU intrachain disulfide bond is thought to occur upon receptor recognition in order to allow membrane fusion. In terms of processing, the transmembrane protein is palmitoylated. The R-peptide is palmitoylated.

The protein resides in the virion membrane. It localises to the host cell membrane. The surface protein (SU) attaches the virus to the host cell by binding to its receptor. This interaction triggers the refolding of the transmembrane protein (TM) and is thought to activate its fusogenic potential by unmasking its fusion peptide. Fusion occurs at the host cell plasma membrane. In terms of biological role, the transmembrane protein (TM) acts as a class I viral fusion protein. Under the current model, the protein has at least 3 conformational states: pre-fusion native state, pre-hairpin intermediate state, and post-fusion hairpin state. During viral and target cell membrane fusion, the coiled coil regions (heptad repeats) assume a trimer-of-hairpins structure, positioning the fusion peptide in close proximity to the C-terminal region of the ectodomain. The formation of this structure appears to drive apposition and subsequent fusion of viral and target cell membranes. Membranes fusion leads to delivery of the nucleocapsid into the cytoplasm. This chain is Envelope glycoprotein (env), found in Mus musculus (Mouse).